The sequence spans 201 residues: 3-isopropylmalate dehydratase small subunit (201 aa).

It belongs to the LeuD family. LeuD type 1 subfamily. In terms of assembly, heterodimer of LeuC and LeuD.

It carries out the reaction (2R,3S)-3-isopropylmalate = (2S)-2-isopropylmalate. It participates in amino-acid biosynthesis; L-leucine biosynthesis; L-leucine from 3-methyl-2-oxobutanoate: step 2/4. Functionally, catalyzes the isomerization between 2-isopropylmalate and 3-isopropylmalate, via the formation of 2-isopropylmaleate. The chain is 3-isopropylmalate dehydratase small subunit from Shigella boydii serotype 18 (strain CDC 3083-94 / BS512).